Here is a 424-residue protein sequence, read N- to C-terminus: Arogenate dehydratase 3, chloroplastic (424 aa).

Residues methionine 1–histidine 24 constitute a chloroplast transit peptide. Over residues glutamate 57–serine 71 the composition is skewed to low complexity. The interval glutamate 57–valine 77 is disordered. Residues arginine 122–arginine 299 form the Prephenate dehydratase domain. The ACT domain occupies serine 313–proline 404.

In terms of assembly, may interact with GPA1. As to expression, expressed in roots, leaves, stems, flowers and siliques.

It is found in the plastid. It localises to the chloroplast stroma. It catalyses the reaction L-arogenate + H(+) = L-phenylalanine + CO2 + H2O. It functions in the pathway amino-acid biosynthesis; L-phenylalanine biosynthesis; L-phenylalanine from L-arogenate: step 1/1. Its function is as follows. Converts the prephenate produced from the shikimate-chorismate pathway into phenylalanine. Together with GCR1 and GPA1, required for blue light-mediated synthesis of phenylpyruvate and subsequently of phenylalanine (Phe), in etiolated seedlings. In Arabidopsis thaliana (Mouse-ear cress), this protein is Arogenate dehydratase 3, chloroplastic.